Consider the following 226-residue polypeptide: MKDLFLFSSLLDASHTFSYFFHIGLVALIAVIVAMMATRSMQLVPRGMQNLAEAFLEGVLSMGRDTMGSEKGVRKYLPLVATLGIIVFFSNIIGILPGFHAPTASLNLTLSLAIIVFVYYHFEGIRAQGFIKYFAHFMGPIKLLAPLMFPIEIVSHLSRVVSLSFRLFGNIKGDDLFLMVILALVPYIAPLPAYVLLTFMAFLQAFIFMILTYVYLAGATVVEKGH.

Transmembrane regions (helical) follow at residues 17–37 (FSYFFHIGLVALIAVIVAMMA), 79–99 (LVATLGIIVFFSNIIGILPGF), 105–125 (SLNLTLSLAIIVFVYYHFEGI), 134–154 (FAHFMGPIKLLAPLMFPIEIV), 176–196 (LFLMVILALVPYIAPLPAYVL), and 199–219 (FMAFLQAFIFMILTYVYLAGA).

This sequence belongs to the ATPase A chain family. In terms of assembly, F-type ATPases have 2 components, CF(1) - the catalytic core - and CF(0) - the membrane proton channel. CF(1) has five subunits: alpha(3), beta(3), gamma(1), delta(1), epsilon(1). CF(0) has three main subunits: a(1), b(2) and c(9-12). The alpha and beta chains form an alternating ring which encloses part of the gamma chain. CF(1) is attached to CF(0) by a central stalk formed by the gamma and epsilon chains, while a peripheral stalk is formed by the delta and b chains.

It is found in the cell inner membrane. In terms of biological role, key component of the proton channel; it plays a direct role in the translocation of protons across the membrane. This chain is ATP synthase subunit a, found in Campylobacter jejuni subsp. doylei (strain ATCC BAA-1458 / RM4099 / 269.97).